A 223-amino-acid polypeptide reads, in one-letter code: Urease accessory protein UreF (223 aa).

This sequence belongs to the UreF family. In terms of assembly, ureD, UreF and UreG form a complex that acts as a GTP-hydrolysis-dependent molecular chaperone, activating the urease apoprotein by helping to assemble the nickel containing metallocenter of UreC. The UreE protein probably delivers the nickel.

It is found in the cytoplasm. In terms of biological role, required for maturation of urease via the functional incorporation of the urease nickel metallocenter. In Sinorhizobium medicae (strain WSM419) (Ensifer medicae), this protein is Urease accessory protein UreF.